A 93-amino-acid chain; its full sequence is SH3 domain-binding glutamic acid-rich-like protein 3 (93 aa).

S2 carries the post-translational modification N-acetylserine. One can recognise a Glutaredoxin domain in the interval 2 to 93 (SGLRVYSTSV…NTLQEFLKLA (92 aa)). T9 carries O-linked (GalNAc...) threonine glycosylation.

The protein belongs to the SH3BGR family. Interacts with MYO1C (via its IQ motifs); the interaction is dependent on calcium and takes place at membrane ruffles. Post-translationally, may be glycosylated. Expressed in heart, liver, lung, kidney, spleen, thymus, ovarian follicles, skeletal muscle, brain, lymph node and mammary epithelial and stromal cells (at protein level).

It is found in the cytoplasm. Its subcellular location is the cytosol. The protein resides in the cell projection. It localises to the ruffle membrane. The protein localises to the nucleus. In terms of biological role, could act as a modulator of glutaredoxin biological activity. May play a role in cytoskeleton organization. This Rattus norvegicus (Rat) protein is SH3 domain-binding glutamic acid-rich-like protein 3.